We begin with the raw amino-acid sequence, 663 residues long: Syntabulin (663 aa).

2 disordered regions span residues 1-202 and 216-267; these read MGPL…PREK and VNIH…PEQY. The tract at residues 2-417 is sufficient for interaction with KIF5B; that stretch reads GPLRESKKEH…DTMADGLSLE (416 aa). Serine 50 is subject to Phosphoserine. Low complexity predominate over residues 57–73; that stretch reads FNPSSSGRSARTVSSNS. Residues 81 to 97 show a composition bias toward polar residues; the sequence is CPSSQSVSPVKTPSDAG. Serine 107 is subject to Phosphoserine. 3 stretches are compositionally biased toward low complexity: residues 145–158, 188–198, and 221–241; these read EADF…GSIS, SSHKPGSSPSS, and SYAP…SDCS. Positions 271–353 form a coiled coil; the sequence is LQQKEVTVRH…MRSSLADKDK (83 aa). The sufficient for interaction with STX1A stretch occupies residues 310 to 417; that stretch reads REDWIEEECH…DTMADGLSLE (108 aa). Phosphoserine is present on residues serine 396 and serine 555. A helical membrane pass occupies residues 606-626; the sequence is SFLVDLLAVAAPVVPTVLWAF.

Interacts with STX1A and KIF5B. Isoform 3, isoform 4 and isoform 5 are expressed in HeLa cell line (at protein level). Isoform 3 is expressed in fetal and adult brain. Isoform 4 is expressed in numerous fetal tissues (brain, kidney, liver, lung, and thymus) and in adult brain, kidney, liver, lung, pancreas, colon, prostate, small intestine, testis and thymus. Isoform 5 is expressed in fetal brain, brain and small intestine.

It is found in the cytoplasm. Its subcellular location is the cytoskeleton. The protein resides in the cytoplasmic vesicle. The protein localises to the golgi apparatus membrane. Its function is as follows. Part of a kinesin motor-adapter complex that is critical for the anterograde axonal transport of active zone components and contributes to activity-dependent presynaptic assembly during neuronal development. The sequence is that of Syntabulin (SYBU) from Homo sapiens (Human).